The following is a 232-amino-acid chain: Ribosomal RNA small subunit methyltransferase G (232 aa).

Residues Gly-75, Phe-80, 126–127 (AE), and Arg-143 each bind S-adenosyl-L-methionine.

Belongs to the methyltransferase superfamily. RNA methyltransferase RsmG family.

Its subcellular location is the cytoplasm. Its function is as follows. Specifically methylates the N7 position of a guanine in 16S rRNA. This Fusobacterium nucleatum subsp. nucleatum (strain ATCC 25586 / DSM 15643 / BCRC 10681 / CIP 101130 / JCM 8532 / KCTC 2640 / LMG 13131 / VPI 4355) protein is Ribosomal RNA small subunit methyltransferase G.